Consider the following 924-residue polypeptide: MSRSRQPPLVTGISPNEGIPWTKVTIRGENLGTGPTDLIGLTICGHNCLLTAEWMSASKIVCRVGQAKNDKGDIIVTTKSGGRGTSTVSFKLLKPEKIGILDQSAVWVDEMNYYDMRTDRNKGIPPLSLRPANPLGIEIEKSKFSQKDLEMLFHGMSADFTSENFSAAWYLIENHSNTSFEQLKMAVTNLKRQANKKSEGSLAYVKGGLSTFFEAQDALSAIHQKLEADGTEKVEGSMTQKLENVLNRASNTADTLFQEVLGRKDKADSTRNALNVLQRFKFLFNLPLNIERNIQKGDYDVVINDYEKAKSLFGKTEVQVFKKYYAEVETRIEALRELLLDKLLETPSTLHDQKRYIRYLSDLHASGDPAWQCIGAQHKWILQLMHSCKEGYVKDLKGNPGLHSPMLDLDNDTRPSVLGHLSQTASLKRGSSFQSGRDDTWRYKTPHRVAFVEKLTKLVLSQLPNFWKLWISYVNGSLFSETAEKSGQIERSKNVRQRQNDFKKMIQEVMHSLVKLTRGALLPLSIRDGEAKQYGGWEVKCELSGQWLAHAIQTVRLTHESLTALEIPNDLLQTIQDLILDLRVRCVMATLQHTAEEIKRLAEKEDWIVDNEGLTSLPCQFEQCIVCSLQSLKGVLECKPGEASVFQQPKTQEEVCQLSINIMQVFIYCLEQLSTKPDADIDTTHLSVDVSSPDLFGSIHEDFSLTSEQRLLIVLSNCCYLERHTFLNIAEHFEKHNFQGIEKITQVSMASLKELDQRLFENYIELKADPIVGSLEPGIYAGYFDWKDCLPPTGVRNYLKEALVNIIAVHAEVFTISKELVPRVLSKVIEAVSEELSRLMQCVSSFSKNGALQARLEICALRDTVAVYLTPESKSSFKQALEALPQLSSGADKKLLEELLNKFKSSMHLQLTCFQAASSTMMKT.

One can recognise an IPT/TIG domain in the interval 8–93; the sequence is PLVTGISPNE…GTSTVSFKLL (86 aa). Positions 240 to 260 form a coiled coil; that stretch reads QKLENVLNRASNTADTLFQEV. 3 positions are modified to phosphoserine: Ser-431, Ser-432, and Ser-435. Thr-440 bears the Phosphothreonine mark. At Lys-454 the chain carries N6-acetyllysine. Ser-888 bears the Phosphoserine mark.

Belongs to the SEC5 family. As to quaternary structure, the exocyst complex is composed of EXOC1, EXOC2, EXOC3, EXOC4, EXOC5, EXOC6, EXOC7 and EXOC8. Interacts with EXOC3L1. Interacts with GNEFR/DELGEF; this interaction occurs only in the presence of magnesium or manganese and is stimulated by dCTP or GTP. Interacts with RALA and RALB. Interacts with ARL13B; regulates ARL13B localization to the cilium membrane. As to expression, widely expressed with highest levels in brain and placenta.

The protein localises to the midbody. It is found in the midbody ring. Its function is as follows. Component of the exocyst complex involved in the docking of exocytic vesicles with fusion sites on the plasma membrane. This is Exocyst complex component 2 (EXOC2) from Homo sapiens (Human).